A 206-amino-acid chain; its full sequence is Small ribosomal subunit protein uS4 (206 aa).

An S4 RNA-binding domain is found at 96–156; that stretch reads TRLDNVVYRM…EKSRTQARIK (61 aa).

Belongs to the universal ribosomal protein uS4 family. Part of the 30S ribosomal subunit. Contacts protein S5. The interaction surface between S4 and S5 is involved in control of translational fidelity.

Its function is as follows. One of the primary rRNA binding proteins, it binds directly to 16S rRNA where it nucleates assembly of the body of the 30S subunit. In terms of biological role, with S5 and S12 plays an important role in translational accuracy. The chain is Small ribosomal subunit protein uS4 from Shewanella sp. (strain MR-4).